A 290-amino-acid polypeptide reads, in one-letter code: Shikimate dehydrogenase (NADP(+)) (290 aa).

Shikimate-binding positions include 20 to 22 (SLS) and Thr-67. Catalysis depends on Lys-71, which acts as the Proton acceptor. Asn-92 and Asp-107 together coordinate shikimate. Residues 132–136 (GAGGA) and Met-228 each bind NADP(+). Tyr-230 serves as a coordination point for shikimate. Gly-251 provides a ligand contact to NADP(+).

It belongs to the shikimate dehydrogenase family. As to quaternary structure, homodimer.

The catalysed reaction is shikimate + NADP(+) = 3-dehydroshikimate + NADPH + H(+). Its pathway is metabolic intermediate biosynthesis; chorismate biosynthesis; chorismate from D-erythrose 4-phosphate and phosphoenolpyruvate: step 4/7. Involved in the biosynthesis of the chorismate, which leads to the biosynthesis of aromatic amino acids. Catalyzes the reversible NADPH linked reduction of 3-dehydroshikimate (DHSA) to yield shikimate (SA). The sequence is that of Shikimate dehydrogenase (NADP(+)) from Geobacter sp. (strain M21).